Consider the following 506-residue polypeptide: Protein P7 (506 aa).

RNA-binding regions lie at residues 128–249 (ISYL…GKRE) and 325–355 (DGSYGNRVIISHKMSRLSNGGVKIIGRFKIS).

The protein belongs to the phytoreovirus protein P7 family.

It is found in the virion. Its subcellular location is the host cytoplasm. In terms of biological role, probable component of the transcriptional machinery present in the inner capsid. Displays dsRNA binding activity and may play an important role in the sorting of viral RNA and virion assembly. Together with the RNA-directed RNA polymerase P1 and capping enzyme P5, forms an transcriptional complex positioned near the channels situated at each of the five-fold vertices of the core. In Alopecurus aequalis (Barnyard grass), this protein is Protein P7.